We begin with the raw amino-acid sequence, 160 residues long: MSKEVVVESFELDHTIVKAPYVRLIGEETGPKGDIISNFDIRLVQPNEDSIPTAGLHTIEHLLAMLIRKRIDGMIDCSPFGCRTGFHMIMWGQHSSSQIAQVIKSCLEEIAESTSWEDVPGTTIESCGNYKDHSLFSAKEWAKLILSQGISDDAFERHVI.

3 residues coordinate Fe cation: His-57, His-61, and Cys-127.

Belongs to the LuxS family. As to quaternary structure, homodimer. It depends on Fe cation as a cofactor.

The catalysed reaction is S-(5-deoxy-D-ribos-5-yl)-L-homocysteine = (S)-4,5-dihydroxypentane-2,3-dione + L-homocysteine. Its function is as follows. Involved in the synthesis of autoinducer 2 (AI-2) which is secreted by bacteria and is used to communicate both the cell density and the metabolic potential of the environment. The regulation of gene expression in response to changes in cell density is called quorum sensing. Catalyzes the transformation of S-ribosylhomocysteine (RHC) to homocysteine (HC) and 4,5-dihydroxy-2,3-pentadione (DPD). This is S-ribosylhomocysteine lyase from Streptococcus sanguinis (strain SK36).